A 332-amino-acid polypeptide reads, in one-letter code: Small ribosomal subunit protein uS2 (332 aa).

The protein belongs to the universal ribosomal protein uS2 family.

The protein is Small ribosomal subunit protein uS2 of Nitrobacter winogradskyi (strain ATCC 25391 / DSM 10237 / CIP 104748 / NCIMB 11846 / Nb-255).